Here is a 263-residue protein sequence, read N- to C-terminus: Triosephosphate isomerase (263 aa).

10–12 contributes to the substrate binding site; the sequence is NWK. The active-site Electrophile is the His-104. Residue Glu-176 is the Proton acceptor of the active site. Substrate-binding positions include Gly-182, Ser-221, and 242–243; that span reads GG.

It belongs to the triosephosphate isomerase family. Homodimer.

It localises to the cytoplasm. It carries out the reaction D-glyceraldehyde 3-phosphate = dihydroxyacetone phosphate. It participates in carbohydrate biosynthesis; gluconeogenesis. The protein operates within carbohydrate degradation; glycolysis; D-glyceraldehyde 3-phosphate from glycerone phosphate: step 1/1. Involved in the gluconeogenesis. Catalyzes stereospecifically the conversion of dihydroxyacetone phosphate (DHAP) to D-glyceraldehyde-3-phosphate (G3P). This is Triosephosphate isomerase from Haemophilus influenzae (strain 86-028NP).